The following is a 488-amino-acid chain: Capsid protein (488 aa).

Residues I80–F93 show a composition bias toward acidic residues. The segment at I80 to Q143 is disordered. The segment covering E94–E109 has biased composition (basic and acidic residues). The Nuclear localization signal signature appears at R121–K124. The segment covering Q134–Q143 has biased composition (polar residues). A CCHC-type zinc finger spans residues C410–N427. Residues Y463–D488 form a disordered region. The segment covering K464 to D488 has biased composition (acidic residues).

The protein belongs to the caulimoviridae capsid protein family. As to quaternary structure, interacts (via nuclear localization signal) with host importin alpha.

It localises to the virion. Its subcellular location is the host nucleus. Self assembles to form an icosahedral capsid, about 50 nm in diameter, nm, composed of 420 subunits of the viral capsid protein. The capsid encapsulates the genomic dsDNA. Following virus entry into host cell, provides nuclear import of the viral genome. Virus particles do not enter the nucleus, but dock at the nuclear membrane through the interaction with host importins. The protein is Capsid protein of Arabidopsis thaliana (Mouse-ear cress).